Here is a 222-residue protein sequence, read N- to C-terminus: MSGKPVLHYFNARGRMECIRWLLAAAGVEFDEKFIQSPEDLEKLKKDGNLMFDQVPMVEIDGMKLAQTRAILNYIATKYDLYGKDMKERALIDMYTEGILDLTEMIMQLVICPPDQKEAKTALAKDRTKNRYLPAFEKVLKSHGQDYLVGNRLTRVDIHLLELLLYVEEFDASLLTSFPLLKAFKSRISSLPNVKKFLQPGSQRKLPVDAKQIEEARKIFKF.

Position 1 is an N-acetylmethionine (Met-1). Residues 3–83 form the GST N-terminal domain; sequence GKPVLHYFNA…YIATKYDLYG (81 aa). Lys-4 is modified (N6-succinyllysine). Residues Tyr-9, Lys-45, 54-55, and 67-68 contribute to the glutathione site; these read QV and QT. Residues 85–208 form the GST C-terminal domain; it reads DMKERALIDM…QPGSQRKLPV (124 aa).

It belongs to the GST superfamily. Alpha family. Homodimer. Homodimer or heterodimer of GSTA1 and GSTA2.

It localises to the cytoplasm. It catalyses the reaction RX + glutathione = an S-substituted glutathione + a halide anion + H(+). It carries out the reaction prostaglandin A2 + glutathione = prostaglandin A2-S-(R)-glutathione. The enzyme catalyses prostaglandin J2 + glutathione = prostaglandin J2-S-(R)-glutathione. The catalysed reaction is (13S)-hydroperoxy-(9Z,11E)-octadecadienoate + 2 glutathione = (13S)-hydroxy-(9Z,11E)-octadecadienoate + glutathione disulfide + H2O. It catalyses the reaction androst-5-ene-3,17-dione = androst-4-ene-3,17-dione. Functionally, glutathione S-transferase that catalyzes the nucleophilic attack of the sulfur atom of glutathione on the electrophilic groups of a wide range of exogenous and endogenous compounds. Involved in the formation of glutathione conjugates of both prostaglandin A2 (PGA2) and prostaglandin J2 (PGJ2). It also catalyzes the isomerization of D5-androstene-3,17-dione (AD) into D4-androstene-3,17-dione and may therefore play an important role in hormone biosynthesis. Through its glutathione-dependent peroxidase activity toward the fatty acid hydroperoxide (13S)-hydroperoxy-(9Z,11E)-octadecadienoate/13-HPODE it is also involved in the metabolism of oxidized linoleic acid. The protein is Glutathione S-transferase alpha-1 (Gsta1) of Rattus norvegicus (Rat).